Consider the following 96-residue polypeptide: Small ribosomal subunit protein bS20 (96 aa).

This sequence belongs to the bacterial ribosomal protein bS20 family.

In terms of biological role, binds directly to 16S ribosomal RNA. The chain is Small ribosomal subunit protein bS20 from Thermotoga petrophila (strain ATCC BAA-488 / DSM 13995 / JCM 10881 / RKU-1).